Reading from the N-terminus, the 1090-residue chain is Leucine--tRNA ligase, cytoplasmic (1090 aa).

Ser2 carries the N-acetylserine modification. The 'HIGH' region signature appears at 66–76; the sequence is PYMNGVMHAGH. At Thr142 the chain carries Phosphothreonine. Positions 729–733 match the 'KMSKS' region motif; the sequence is KMSKS. Lys732 is an ATP binding site.

This sequence belongs to the class-I aminoacyl-tRNA synthetase family.

The protein localises to the cytoplasm. The enzyme catalyses tRNA(Leu) + L-leucine + ATP = L-leucyl-tRNA(Leu) + AMP + diphosphate. This Saccharomyces cerevisiae (strain ATCC 204508 / S288c) (Baker's yeast) protein is Leucine--tRNA ligase, cytoplasmic (CDC60).